The following is a 291-amino-acid chain: Acetylglutamate kinase (291 aa).

Substrate-binding positions include 65–66 (GG), arginine 87, and asparagine 186.

It belongs to the acetylglutamate kinase family. ArgB subfamily.

It is found in the cytoplasm. The catalysed reaction is N-acetyl-L-glutamate + ATP = N-acetyl-L-glutamyl 5-phosphate + ADP. Its pathway is amino-acid biosynthesis; L-arginine biosynthesis; N(2)-acetyl-L-ornithine from L-glutamate: step 2/4. Functionally, catalyzes the ATP-dependent phosphorylation of N-acetyl-L-glutamate. The polypeptide is Acetylglutamate kinase (Mycolicibacterium vanbaalenii (strain DSM 7251 / JCM 13017 / BCRC 16820 / KCTC 9966 / NRRL B-24157 / PYR-1) (Mycobacterium vanbaalenii)).